Reading from the N-terminus, the 287-residue chain is Bifunctional protein FolD (287 aa).

Residues 171 to 173, I196, and I237 each bind NADP(+); that span reads GHS.

This sequence belongs to the tetrahydrofolate dehydrogenase/cyclohydrolase family. As to quaternary structure, homodimer.

The catalysed reaction is (6R)-5,10-methylene-5,6,7,8-tetrahydrofolate + NADP(+) = (6R)-5,10-methenyltetrahydrofolate + NADPH. It catalyses the reaction (6R)-5,10-methenyltetrahydrofolate + H2O = (6R)-10-formyltetrahydrofolate + H(+). Its pathway is one-carbon metabolism; tetrahydrofolate interconversion. In terms of biological role, catalyzes the oxidation of 5,10-methylenetetrahydrofolate to 5,10-methenyltetrahydrofolate and then the hydrolysis of 5,10-methenyltetrahydrofolate to 10-formyltetrahydrofolate. This is Bifunctional protein FolD from Methanosarcina mazei (strain ATCC BAA-159 / DSM 3647 / Goe1 / Go1 / JCM 11833 / OCM 88) (Methanosarcina frisia).